The sequence spans 267 residues: MSQNIVIVGASGRMGRVLIEAVLDAPGARLHAAIDRADSGFVGQDAGLFCGRSSGVFISSDFIAALDGADVVIDFTRPEGTLEHMLACVERGVRMVIGTTGFDDEGKAAIRAAAGKIGIVFASNFSVGVNLTFKLLDMAARVLNEGYDVEIIEAHHRFKVDAPSGTALRMGEVIADALGRDLKQCAVYGREGVTGERDPQAIGFATVRGGDVVGDHTALFAALGERVEISHKASSRATFANGAVRAARWLSDKRNGLFDMQDVLGLR.

Residues 9 to 14 and aspartate 35 each bind NAD(+); that span reads GASGRM. NADP(+) is bound at residue arginine 36. Residues 98-100 and 122-125 each bind NAD(+); these read GTT and ASNF. Histidine 155 acts as the Proton donor/acceptor in catalysis. Histidine 156 serves as a coordination point for (S)-2,3,4,5-tetrahydrodipicolinate. The Proton donor role is filled by lysine 159. 165–166 is a binding site for (S)-2,3,4,5-tetrahydrodipicolinate; that stretch reads GT.

Belongs to the DapB family.

It localises to the cytoplasm. The catalysed reaction is (S)-2,3,4,5-tetrahydrodipicolinate + NAD(+) + H2O = (2S,4S)-4-hydroxy-2,3,4,5-tetrahydrodipicolinate + NADH + H(+). The enzyme catalyses (S)-2,3,4,5-tetrahydrodipicolinate + NADP(+) + H2O = (2S,4S)-4-hydroxy-2,3,4,5-tetrahydrodipicolinate + NADPH + H(+). It participates in amino-acid biosynthesis; L-lysine biosynthesis via DAP pathway; (S)-tetrahydrodipicolinate from L-aspartate: step 4/4. Its function is as follows. Catalyzes the conversion of 4-hydroxy-tetrahydrodipicolinate (HTPA) to tetrahydrodipicolinate. This is 4-hydroxy-tetrahydrodipicolinate reductase from Chromobacterium violaceum (strain ATCC 12472 / DSM 30191 / JCM 1249 / CCUG 213 / NBRC 12614 / NCIMB 9131 / NCTC 9757 / MK).